Here is a 607-residue protein sequence, read N- to C-terminus: MLSYQDKVGAFYKDNARANSSRLSLVTEDQGGRRPPYLLFVLLILLVGIMALLAITGVRFHQVSTSNMEFSRLLKEDMEKSEAVHHQVIDVLTPLFKIIGDEIGLRLPQKLNEIKQFILQKTNFFNPNREFDFRDLHWCINPPSKIKVNFTNYCDTIGIRKSIASAANPILLSALSRSRGDIFPPYRCSGATTSVGSVFPLSVSLSMSLISRTSEIINMLTAISDGVYGKTYLLVPDYLEGEFDTQKIRVFEIGFIKRWLNNMPLLQTTNYMVLPENSKAKVCTIAVGELTLASLCVDESTVLLYHDSNGSQGGILVVTLGIFGATPMDQVEEVIPVPHPSVEKIHITNHRGFIKDSIATWMVPALVSEKQEEQKNCLESACQRKSYPMCNQTSWEPFGGGQLPSYGRLTLPLDPSIDLQLNISFTYGPVILNGDGMDYYESPLLDSGWLTIPPKNGTVLGLINKASRGDQFTVIPHVLTFAPRESSGNCYLPIQTSQIMDKDVLTESNLVVLPTQNFIYVIATYDISRGDHAIVYYVYDPIRTISYTHAFRLTTKGRPDFLRIECFVWDDDLWCHQFYRFEADSTNSTTSVENLVRIRFSCNRSKP.

Topologically, residues 1 to 37 are intravirion; sequence MLSYQDKVGAFYKDNARANSSRLSLVTEDQGGRRPPY. A helical membrane pass occupies residues 38–58; that stretch reads LLFVLLILLVGIMALLAITGV. The Virion surface segment spans residues 59-607; the sequence is RFHQVSTSNM…IRFSCNRSKP (549 aa). 7 N-linked (GlcNAc...) asparagine; by host glycosylation sites follow: Asn149, Asn309, Asn391, Asn422, Asn456, Asn587, and Asn603.

This sequence belongs to the paramyxoviruses hemagglutinin-neuraminidase family. Non-sialidase subfamily. In terms of assembly, binds canine SLAMF1 at the cell surface.

The protein localises to the virion membrane. Its subcellular location is the host cell membrane. Functionally, attaches the virus to cell receptors and thereby initiating infection. Binding of H protein to the receptor induces a conformational change that allows the F protein to trigger virion/cell membranes fusion. The cellular receptor might be SLAM, and may explain the lymphotropism of the virus. The chain is Hemagglutinin glycoprotein (H) from Canine distemper virus (strain A92-27/4) (CDV).